Reading from the N-terminus, the 325-residue chain is MSWLTPEVIDILLTVVKAVVILLVVVTCGAYMSFAERRLLGLFQNRYGPNRVGWGGSLQLLADVLKMMFKEDWIPPFADRGIFTLAPVIAFTSLLITFAIVPVSPTWVVADFNIGVLFFLMMAGLAVYAVLFAGWSSNNKYSLLGAMRASAQTLSYEVFLGLSLMGVVAQAGSFNLGAIVESQAHLWNVVPQFFGFVTFALAGVAVCHRHPFDQPEAEQELADGYHIEYSGMKFGLFFVGEYVGIVTISALMVTLFFGGWQGPWLPPFIWFSIKTAFFMMMFILIRAALPRPRYDQVMALGWKICLPLTLLNLLATAAVILYNAH.

The next 8 helical transmembrane spans lie at 8-28, 81-101, 114-134, 159-179, 186-206, 237-257, 265-285, and 304-324; these read VIDILLTVVKAVVILLVVVTC, GIFTLAPVIAFTSLLITFAIV, IGVLFFLMMAGLAVYAVLFAG, FLGLSLMGVVAQAGSFNLGAI, LWNVVPQFFGFVTFALAGVAV, FFVGEYVGIVTISALMVTLFF, LPPFIWFSIKTAFFMMMFILI, and ICLPLTLLNLLATAAVILYNA.

This sequence belongs to the complex I subunit 1 family. As to quaternary structure, NDH-1 is composed of 13 different subunits. Subunits NuoA, H, J, K, L, M, N constitute the membrane sector of the complex.

Its subcellular location is the cell inner membrane. The enzyme catalyses a quinone + NADH + 5 H(+)(in) = a quinol + NAD(+) + 4 H(+)(out). NDH-1 shuttles electrons from NADH, via FMN and iron-sulfur (Fe-S) centers, to quinones in the respiratory chain. The immediate electron acceptor for the enzyme in this species is believed to be ubiquinone. Couples the redox reaction to proton translocation (for every two electrons transferred, four hydrogen ions are translocated across the cytoplasmic membrane), and thus conserves the redox energy in a proton gradient. This subunit may bind ubiquinone. The protein is NADH-quinone oxidoreductase subunit H of Sodalis glossinidius (strain morsitans).